The following is a 283-amino-acid chain: MKHSFSRFFGFGEKEEEPEIAEHDTNKEEILEIPVHAIVPNRFQPRTIFSDEKIKELAMTIHTHGIIQPIVVRHTEDEGQYELIAGERRWRAVQTLEWEKIPAIIKDFSDTETASVALIENLQREELSSIEEAHAYARLLELHDLTQEALAQRLGKGQSTIANKLRLLKLPEPVQDAIMEKKITERHARALIPLKQPEFQVTLLAEIIEKSLNVKQTEDRVVKMLEQNKQKPKPRRKAFSRDTRIAMNTIRQSLSMVEDSGVRLNTEEEEFEEYIQLTIRIPK.

Residues 1–21 (MKHSFSRFFGFGEKEEEPEIA) are disordered. The segment at residues 148-167 (EALAQRLGKGQSTIANKLRL) is a DNA-binding region (H-T-H motif).

It belongs to the ParB family.

Its subcellular location is the cytoplasm. It localises to the nucleoid. Effects nucleoid occlusion by binding relatively nonspecifically to DNA and preventing the assembly of the division machinery in the vicinity of the nucleoid, especially under conditions that disturb the cell cycle. It helps to coordinate cell division and chromosome segregation by preventing the formation of the Z ring through the nucleoid, which would cause chromosome breakage. This chain is Nucleoid occlusion protein, found in Bacillus velezensis (strain DSM 23117 / BGSC 10A6 / LMG 26770 / FZB42) (Bacillus amyloliquefaciens subsp. plantarum).